Consider the following 21-residue polypeptide: Paulistine (21 aa).

Cys7 and Cys14 are disulfide-bonded. The residue at position 21 (Thr21) is a Threonine amide.

It belongs to the sylv/frat/paul family. Post-translationally, occurs in oxidized and reduced states which are thought to adopt a compact globular and linear structure, respectively.

Induces transient hyperalgesia and paw edema in mice. Probably exerts its effects via different pathways in an oxidation state-dependent way. The sequence is that of Paulistine from Polybia paulista (Neotropical social wasp).